The following is a 357-amino-acid chain: DNA polymerase IV 2 (357 aa).

The 181-residue stretch at 4 to 184 (IIHVDMDAFY…LAVKKFHGVG (181 aa)) folds into the UmuC domain. Mg(2+) is bound by residues D8 and D102. The active site involves E103.

Belongs to the DNA polymerase type-Y family. In terms of assembly, monomer. Requires Mg(2+) as cofactor.

It localises to the cytoplasm. The enzyme catalyses DNA(n) + a 2'-deoxyribonucleoside 5'-triphosphate = DNA(n+1) + diphosphate. In terms of biological role, poorly processive, error-prone DNA polymerase involved in untargeted mutagenesis. Copies undamaged DNA at stalled replication forks, which arise in vivo from mismatched or misaligned primer ends. These misaligned primers can be extended by PolIV. Exhibits no 3'-5' exonuclease (proofreading) activity. May be involved in translesional synthesis, in conjunction with the beta clamp from PolIII. The sequence is that of DNA polymerase IV 2 (dinB2) from Agrobacterium fabrum (strain C58 / ATCC 33970) (Agrobacterium tumefaciens (strain C58)).